The following is a 271-amino-acid chain: Thiazole synthase (271 aa).

Residue Lys-104 is the Schiff-base intermediate with DXP of the active site. Residues Gly-165, 192-193, and 214-215 each bind 1-deoxy-D-xylulose 5-phosphate; these read AG and NT.

This sequence belongs to the ThiG family. In terms of assembly, homotetramer. Forms heterodimers with either ThiH or ThiS.

Its subcellular location is the cytoplasm. The enzyme catalyses [ThiS sulfur-carrier protein]-C-terminal-Gly-aminoethanethioate + 2-iminoacetate + 1-deoxy-D-xylulose 5-phosphate = [ThiS sulfur-carrier protein]-C-terminal Gly-Gly + 2-[(2R,5Z)-2-carboxy-4-methylthiazol-5(2H)-ylidene]ethyl phosphate + 2 H2O + H(+). Its pathway is cofactor biosynthesis; thiamine diphosphate biosynthesis. In terms of biological role, catalyzes the rearrangement of 1-deoxy-D-xylulose 5-phosphate (DXP) to produce the thiazole phosphate moiety of thiamine. Sulfur is provided by the thiocarboxylate moiety of the carrier protein ThiS. In vitro, sulfur can be provided by H(2)S. The sequence is that of Thiazole synthase from Burkholderia thailandensis (strain ATCC 700388 / DSM 13276 / CCUG 48851 / CIP 106301 / E264).